The following is a 785-amino-acid chain: Endonuclease MutS2 (785 aa).

335–342 (GPNTGGKT) contacts ATP. Residues 710-785 (LDLRGERYED…GNGVTIVEFK (76 aa)) enclose the Smr domain.

It belongs to the DNA mismatch repair MutS family. MutS2 subfamily. Homodimer. Binds to stalled ribosomes, contacting rRNA.

Functionally, endonuclease that is involved in the suppression of homologous recombination and thus may have a key role in the control of bacterial genetic diversity. Its function is as follows. Acts as a ribosome collision sensor, splitting the ribosome into its 2 subunits. Detects stalled/collided 70S ribosomes which it binds and splits by an ATP-hydrolysis driven conformational change. Acts upstream of the ribosome quality control system (RQC), a ribosome-associated complex that mediates the extraction of incompletely synthesized nascent chains from stalled ribosomes and their subsequent degradation. Probably generates substrates for RQC. The chain is Endonuclease MutS2 from Listeria welshimeri serovar 6b (strain ATCC 35897 / DSM 20650 / CCUG 15529 / CIP 8149 / NCTC 11857 / SLCC 5334 / V8).